Here is a 298-residue protein sequence, read N- to C-terminus: MAAAEPAVPALPGGGGAGAGAPSGTVPVLFCFSVFARPAAVPHGAGYELLIQKFLSLYGDQIDMHRKFVVQLFAEEWGQYVDLPKGFAVSERCKVRLVPLQIQLTTLGNLTPSSTVFFCCDMQERFRPAIKYFGDIISVGQRLLQGARILGIPVIVTEQYPKGLGSTVQEIDLTGVKLVLPKTKFSMVLPEVEAALAEIPGVRSVVLFGVETHVCIQQTALELVGRGIEVHIVADATSSRSMMDRMFALERLARTGIIVTTSEAVLLQLVADKDHPKFKEIQNLIKASAPESGLLSKV.

Tyr-160 bears the Phosphotyrosine mark. Lys-279 is modified (N6-succinyllysine).

It belongs to the isochorismatase family.

The sequence is that of Isochorismatase domain-containing protein 1 (ISOC1) from Bos taurus (Bovine).